The primary structure comprises 298 residues: NADH-cytochrome b5 reductase 2 (298 aa).

A helical transmembrane segment spans residues 13 to 33 (FLPFAIGAVAVTAGALYLNGW). The FAD-binding FR-type domain occupies 48–152 (RKWIDLELEK…QGPIPKWQWK (105 aa)). FAD is bound at residue 155–190 (SFDTITLLGGGTGITPLYQLVHHITQNKEDKTKINL).

Belongs to the flavoprotein pyridine nucleotide cytochrome reductase family. FAD is required as a cofactor.

Its subcellular location is the mitochondrion outer membrane. It carries out the reaction 2 Fe(III)-[cytochrome b5] + NADH = 2 Fe(II)-[cytochrome b5] + NAD(+) + H(+). Functionally, may mediate the reduction of outer membrane cytochrome b5. The protein is NADH-cytochrome b5 reductase 2 (MCR1) of Candida glabrata (strain ATCC 2001 / BCRC 20586 / JCM 3761 / NBRC 0622 / NRRL Y-65 / CBS 138) (Yeast).